Reading from the N-terminus, the 61-residue chain is UPF0434 protein Bpet2671 (61 aa).

Belongs to the UPF0434 family.

In Bordetella petrii (strain ATCC BAA-461 / DSM 12804 / CCUG 43448), this protein is UPF0434 protein Bpet2671.